A 156-amino-acid polypeptide reads, in one-letter code: MQDAAAGGPPGLGGGGPPEERTDCIICCSAYDLSGHLPRRLYCGHTFCQACVRRLDTPAPEQRWIPCPQCRQSTPTPRGGVAMLDLDLAAFLAVKAEREPARLEPLPLTSLKGSAITRQPAGLCPALGPQPHFPQPRYCCWGCGSLCCPPLGSPEV.

The segment at C24–R71 adopts an RING-type zinc-finger fold.

The chain is RING finger protein 224 (RNF224) from Homo sapiens (Human).